A 258-amino-acid polypeptide reads, in one-letter code: L-aminoadipate-semialdehyde dehydrogenase-phosphopantetheinyl transferase (258 aa).

Belongs to the P-Pant transferase superfamily. AcpS family.

It catalyses the reaction apo-[ACP] + CoA = holo-[ACP] + adenosine 3',5'-bisphosphate + H(+). Functionally, catalyzes the transfer of a 4'-phosphopantetheine moiety from coenzyme A to a serine residue of acceptor proteins, such as alpha-aminoadipate reductase. Necessary for alpha-aminoadipate reductase activity. This Candida glabrata (strain ATCC 2001 / BCRC 20586 / JCM 3761 / NBRC 0622 / NRRL Y-65 / CBS 138) (Yeast) protein is L-aminoadipate-semialdehyde dehydrogenase-phosphopantetheinyl transferase (LYS5).